The primary structure comprises 325 residues: Aspartate carbamoyltransferase catalytic subunit (325 aa).

R64 and T65 together coordinate carbamoyl phosphate. K92 lines the L-aspartate pocket. Residues R114, H142, and Q145 each coordinate carbamoyl phosphate. R176 and R230 together coordinate L-aspartate. Carbamoyl phosphate is bound by residues G271 and P272.

Belongs to the aspartate/ornithine carbamoyltransferase superfamily. ATCase family. In terms of assembly, heterododecamer (2C3:3R2) of six catalytic PyrB chains organized as two trimers (C3), and six regulatory PyrI chains organized as three dimers (R2).

The catalysed reaction is carbamoyl phosphate + L-aspartate = N-carbamoyl-L-aspartate + phosphate + H(+). It functions in the pathway pyrimidine metabolism; UMP biosynthesis via de novo pathway; (S)-dihydroorotate from bicarbonate: step 2/3. Catalyzes the condensation of carbamoyl phosphate and aspartate to form carbamoyl aspartate and inorganic phosphate, the committed step in the de novo pyrimidine nucleotide biosynthesis pathway. The sequence is that of Aspartate carbamoyltransferase catalytic subunit from Nitratidesulfovibrio vulgaris (strain DSM 19637 / Miyazaki F) (Desulfovibrio vulgaris).